We begin with the raw amino-acid sequence, 48 residues long: Palustrin-3b (48 aa).

Cys43 and Cys48 are oxidised to a cystine.

As to expression, expressed by the skin glands.

It localises to the secreted. Its function is as follows. Antimicrobial activity against Gram-negative bacterium E.coli. The sequence is that of Palustrin-3b from Lithobates palustris (Pickerel frog).